Here is a 381-residue protein sequence, read N- to C-terminus: Succinyl-diaminopimelate desuccinylase (381 aa).

His68 contributes to the Zn(2+) binding site. Asp70 is an active-site residue. Asp101 lines the Zn(2+) pocket. Glu135 serves as the catalytic Proton acceptor. Zn(2+) is bound by residues Glu136, Glu164, and His350.

The protein belongs to the peptidase M20A family. DapE subfamily. Homodimer. Requires Zn(2+) as cofactor. It depends on Co(2+) as a cofactor.

The enzyme catalyses N-succinyl-(2S,6S)-2,6-diaminopimelate + H2O = (2S,6S)-2,6-diaminopimelate + succinate. Its pathway is amino-acid biosynthesis; L-lysine biosynthesis via DAP pathway; LL-2,6-diaminopimelate from (S)-tetrahydrodipicolinate (succinylase route): step 3/3. Functionally, catalyzes the hydrolysis of N-succinyl-L,L-diaminopimelic acid (SDAP), forming succinate and LL-2,6-diaminopimelate (DAP), an intermediate involved in the bacterial biosynthesis of lysine and meso-diaminopimelic acid, an essential component of bacterial cell walls. This is Succinyl-diaminopimelate desuccinylase from Neisseria gonorrhoeae (strain NCCP11945).